The chain runs to 1018 residues: Integrator complex subunit 5 (1018 aa).

The interval 1 to 26 (MSALCDPPGAPGPPGPAPATHGPAPL) is disordered. Ser2 bears the N-acetylserine mark. Positions 8–17 (PGAPGPPGPA) are enriched in pro residues. Ser278 carries the phosphoserine modification. Transmembrane regions (helical) follow at residues 533-553 (LATQ…PLAF), 855-875 (LLFE…YCSV), and 929-949 (VFSQ…WGFL).

It belongs to the Integrator subunit 5 family. As to quaternary structure, component of the Integrator complex, composed of core subunits INTS1, INTS2, INTS3, INTS4, INTS5, INTS6, INTS7, INTS8, INTS9/RC74, INTS10, INTS11/CPSF3L, INTS12, INTS13, INTS14 and INTS15. The core complex associates with protein phosphatase 2A subunits PPP2CA and PPP2R1A, to form the Integrator-PP2A (INTAC) complex.

It localises to the nucleus. It is found in the cytoplasm. The protein localises to the nucleus membrane. In terms of biological role, component of the integrator complex, a multiprotein complex that terminates RNA polymerase II (Pol II) transcription in the promoter-proximal region of genes. The integrator complex provides a quality checkpoint during transcription elongation by driving premature transcription termination of transcripts that are unfavorably configured for transcriptional elongation: the complex terminates transcription by (1) catalyzing dephosphorylation of the C-terminal domain (CTD) of Pol II subunit POLR2A/RPB1 and SUPT5H/SPT5, (2) degrading the exiting nascent RNA transcript via endonuclease activity and (3) promoting the release of Pol II from bound DNA. The integrator complex is also involved in terminating the synthesis of non-coding Pol II transcripts, such as enhancer RNAs (eRNAs), small nuclear RNAs (snRNAs), telomerase RNAs and long non-coding RNAs (lncRNAs). Mediates recruitment of cytoplasmic dynein to the nuclear envelope, probably as component of the integrator complex. This chain is Integrator complex subunit 5 (Ints5), found in Mus musculus (Mouse).